The chain runs to 161 residues: Cyclic pyranopterin monophosphate synthase (161 aa).

Residues leucine 75–histidine 77 and methionine 113–glutamate 114 contribute to the substrate site. Aspartate 128 is an active-site residue.

This sequence belongs to the MoaC family. Homohexamer; trimer of dimers.

The catalysed reaction is (8S)-3',8-cyclo-7,8-dihydroguanosine 5'-triphosphate = cyclic pyranopterin phosphate + diphosphate. The protein operates within cofactor biosynthesis; molybdopterin biosynthesis. Catalyzes the conversion of (8S)-3',8-cyclo-7,8-dihydroguanosine 5'-triphosphate to cyclic pyranopterin monophosphate (cPMP). The sequence is that of Cyclic pyranopterin monophosphate synthase from Shigella sonnei (strain Ss046).